Here is a 341-residue protein sequence, read N- to C-terminus: UPF0284 protein Ta0078 (341 aa).

This sequence belongs to the UPF0284 family.

The chain is UPF0284 protein Ta0078 from Thermoplasma acidophilum (strain ATCC 25905 / DSM 1728 / JCM 9062 / NBRC 15155 / AMRC-C165).